We begin with the raw amino-acid sequence, 357 residues long: UDP-N-acetylglucosamine--N-acetylmuramyl-(pentapeptide) pyrophosphoryl-undecaprenol N-acetylglucosamine transferase (357 aa).

UDP-N-acetyl-alpha-D-glucosamine-binding positions include 13–15 (TGG), N125, R161, S189, I243, and Q288.

It belongs to the glycosyltransferase 28 family. MurG subfamily.

It is found in the cell inner membrane. It carries out the reaction di-trans,octa-cis-undecaprenyl diphospho-N-acetyl-alpha-D-muramoyl-L-alanyl-D-glutamyl-meso-2,6-diaminopimeloyl-D-alanyl-D-alanine + UDP-N-acetyl-alpha-D-glucosamine = di-trans,octa-cis-undecaprenyl diphospho-[N-acetyl-alpha-D-glucosaminyl-(1-&gt;4)]-N-acetyl-alpha-D-muramoyl-L-alanyl-D-glutamyl-meso-2,6-diaminopimeloyl-D-alanyl-D-alanine + UDP + H(+). Its pathway is cell wall biogenesis; peptidoglycan biosynthesis. Cell wall formation. Catalyzes the transfer of a GlcNAc subunit on undecaprenyl-pyrophosphoryl-MurNAc-pentapeptide (lipid intermediate I) to form undecaprenyl-pyrophosphoryl-MurNAc-(pentapeptide)GlcNAc (lipid intermediate II). The polypeptide is UDP-N-acetylglucosamine--N-acetylmuramyl-(pentapeptide) pyrophosphoryl-undecaprenol N-acetylglucosamine transferase (Bordetella parapertussis (strain 12822 / ATCC BAA-587 / NCTC 13253)).